Here is a 161-residue protein sequence, read N- to C-terminus: Probable chemoreceptor glutamine deamidase CheD (161 aa).

Belongs to the CheD family.

It catalyses the reaction L-glutaminyl-[protein] + H2O = L-glutamyl-[protein] + NH4(+). In terms of biological role, probably deamidates glutamine residues to glutamate on methyl-accepting chemotaxis receptors (MCPs), playing an important role in chemotaxis. This Syntrophomonas wolfei subsp. wolfei (strain DSM 2245B / Goettingen) protein is Probable chemoreceptor glutamine deamidase CheD.